A 302-amino-acid polypeptide reads, in one-letter code: tRNA pseudouridine synthase B (302 aa).

Residue aspartate 38 is the Nucleophile of the active site.

The protein belongs to the pseudouridine synthase TruB family. Type 1 subfamily.

The catalysed reaction is uridine(55) in tRNA = pseudouridine(55) in tRNA. Functionally, responsible for synthesis of pseudouridine from uracil-55 in the psi GC loop of transfer RNAs. This Ligilactobacillus salivarius (strain UCC118) (Lactobacillus salivarius) protein is tRNA pseudouridine synthase B.